The sequence spans 237 residues: Exosome complex component Rrp4 (237 aa).

The S1 motif domain occupies 72–144 (GHIVVGKVVD…LSKDPVLTIK (73 aa)). The 60-residue stretch at 152–211 (PRGTLVEIPPQKVPRVIGRRGSMVSMIEDLLGVKLIVGQNGRIVVVGDDPQRVEIAVLAV) folds into the KH domain.

Belongs to the RRP4 family. Component of the archaeal exosome complex. Forms a trimer of Rrp4 and/or Csl4 subunits. The trimer associates with a hexameric ring-like arrangement composed of 3 Rrp41-Rrp42 heterodimers.

It localises to the cytoplasm. Non-catalytic component of the exosome, which is a complex involved in RNA degradation. Increases the RNA binding and the efficiency of RNA degradation. Confers strong poly(A) specificity to the exosome. The chain is Exosome complex component Rrp4 from Thermofilum pendens (strain DSM 2475 / Hrk 5).